Here is a 252-residue protein sequence, read N- to C-terminus: Acetoacetate decarboxylase (252 aa).

Catalysis depends on K116, which acts as the Schiff-base intermediate with acetoacetate.

This sequence belongs to the ADC family.

The enzyme catalyses acetoacetate + H(+) = acetone + CO2. Catalyzes the conversion of acetoacetate to acetone and carbon dioxide. The chain is Acetoacetate decarboxylase from Paraburkholderia phytofirmans (strain DSM 17436 / LMG 22146 / PsJN) (Burkholderia phytofirmans).